The chain runs to 305 residues: MPINIPDDLPAASILESEKIFVMNENRARHQDIRPLEILIFNLMPSKVETETQILRLLSNSPIQIDIDLLRTETYISKHTSQDYLQHFYKTFNEIKNKKYDGMIITGAPVENMPYESVKYWKEFCEILDWSLTNSFSTMHICWGALAALYYHYGIPKHPLDEKISGIYAHVPLEYYHPLLRGFDDVFYMPHSRYMTVKESDLKGDLKVLARSEETGPAIIMSDKLRQVFVTGHLEYDTMTLANEYKRDLEKGLHPVIPENYFPDNDPNAAPKKLWRSHASLLFSNWLNYYVYQQTPYDLLKIGRS.

The active-site Acyl-thioester intermediate is C142. Positions 163 and 192 each coordinate substrate. The active-site Proton acceptor is the H233. E235 is a catalytic residue. R247 provides a ligand contact to substrate.

It belongs to the MetA family.

The protein resides in the cytoplasm. It carries out the reaction L-homoserine + acetyl-CoA = O-acetyl-L-homoserine + CoA. It participates in amino-acid biosynthesis; L-methionine biosynthesis via de novo pathway; O-acetyl-L-homoserine from L-homoserine: step 1/1. Functionally, transfers an acetyl group from acetyl-CoA to L-homoserine, forming acetyl-L-homoserine. This chain is Homoserine O-acetyltransferase, found in Methanomassiliicoccus intestinalis (strain Issoire-Mx1).